A 372-amino-acid chain; its full sequence is N-methyl-L-tryptophan oxidase (372 aa).

Asp-4–His-34 serves as a coordination point for FAD. Cys-307 is subject to S-8alpha-FAD cysteine.

Belongs to the MSOX/MTOX family. MTOX subfamily. In terms of assembly, monomer. It depends on FAD as a cofactor.

It carries out the reaction N(alpha)-methyl-L-tryptophan + O2 + H2O = L-tryptophan + formaldehyde + H2O2. Its function is as follows. Catalyzes the oxidative demethylation of N-methyl-L-tryptophan. This chain is N-methyl-L-tryptophan oxidase, found in Salmonella heidelberg (strain SL476).